The chain runs to 344 residues: tRNA N6-adenosine threonylcarbamoyltransferase (344 aa).

Residues histidine 110 and histidine 114 each contribute to the Fe cation site. Substrate is bound by residues 133-137 (VVSGA), aspartate 166, glycine 179, and asparagine 278. Aspartate 303 is a Fe cation binding site.

It belongs to the KAE1 / TsaD family. It depends on Fe(2+) as a cofactor.

The protein resides in the cytoplasm. It carries out the reaction L-threonylcarbamoyladenylate + adenosine(37) in tRNA = N(6)-L-threonylcarbamoyladenosine(37) in tRNA + AMP + H(+). In terms of biological role, required for the formation of a threonylcarbamoyl group on adenosine at position 37 (t(6)A37) in tRNAs that read codons beginning with adenine. Is involved in the transfer of the threonylcarbamoyl moiety of threonylcarbamoyl-AMP (TC-AMP) to the N6 group of A37, together with TsaE and TsaB. TsaD likely plays a direct catalytic role in this reaction. The chain is tRNA N6-adenosine threonylcarbamoyltransferase from Chlamydia abortus (strain DSM 27085 / S26/3) (Chlamydophila abortus).